Consider the following 291-residue polypeptide: Homoserine kinase (291 aa).

80-90 (PLARGLGSSST) is a binding site for ATP.

The protein belongs to the GHMP kinase family. Homoserine kinase subfamily.

It is found in the cytoplasm. It catalyses the reaction L-homoserine + ATP = O-phospho-L-homoserine + ADP + H(+). The protein operates within amino-acid biosynthesis; L-threonine biosynthesis; L-threonine from L-aspartate: step 4/5. Its function is as follows. Catalyzes the ATP-dependent phosphorylation of L-homoserine to L-homoserine phosphate. This is Homoserine kinase from Lactiplantibacillus plantarum (strain ATCC BAA-793 / NCIMB 8826 / WCFS1) (Lactobacillus plantarum).